A 1158-amino-acid polypeptide reads, in one-letter code: Protein transport protein Sec31B (1158 aa).

7 WD repeats span residues 4–47, 65–110, 119–159, 166–206, 209–254, 258–298, and 301–341; these read KELE…EIFE, VSSR…SSGK, KHTG…VPMT, NPPE…PIIK, SHSS…SPLK, SHSR…VVYK, and TQSS…WEAQ. The WD 8; interaction with SEC13 repeat unit spans residues 376–407; that stretch reads SFAFGGKLVTFGLPSIPVQPVAQACSRPVFIS. Disordered stretches follow at residues 485–520, 797–843, and 968–1010; these read LKSD…HTAK, TSSY…SSDH, and GPQD…PEPQ. Low complexity predominate over residues 822–840; it reads QPSSVMPFSPSQPSPSQGS.

The protein belongs to the WD repeat SEC31 family. In terms of assembly, COPII is composed of at least 5 proteins: the SEC23/24 complex, the SEC13/31 complex and SAR1. SEC13 and SEC31 make a 2:2 tetramer that forms the edge element of the COPII outer coat. The tetramer self-assembles in multiple copies to form the complete polyhedral cage. Interacts (via WD 8) with SEC13. Interacts with SEC31A. Post-translationally, monoubiquitinated by the BCR(KLHL12) E3 ubiquitin ligase complex, leading to regulate the size of COPII coats.

The protein resides in the cytoplasm. It localises to the cytoplasmic vesicle. It is found in the COPII-coated vesicle membrane. The protein localises to the endoplasmic reticulum membrane. Functionally, as a component of the coat protein complex II (COPII), may function in vesicle budding and cargo export from the endoplasmic reticulum. The protein is Protein transport protein Sec31B (Sec31b) of Mus musculus (Mouse).